A 492-amino-acid chain; its full sequence is E3 ubiquitin-protein ligase ARIH2 (492 aa).

Positions 1–11 (MSVDMNSQGSD) are enriched in polar residues. The segment at 1 to 37 (MSVDMNSQGSDSNEEDYDPNCEEEEEEEEDPGDIEDY) is disordered. The segment covering 12-36 (SNEEDYDPNCEEEEEEEEDPGDIED) has biased composition (acidic residues). The interval 64-111 (TYKESEGALHEHMTSLASVLKVSHSVAKLILVNFHWQVSEILDRYRSN) is UBA-like. Positions 134-343 (PPHHCAVCMQ…SEYYECSRYK (210 aa)) are TRIAD supradomain. Positions 138, 141, 155, 157, 160, 163, 182, 187, 227, 232, 248, 251, 256, 259, 264, 269, 296, and 299 each coordinate Zn(2+). The RING-type 1 zinc finger occupies 138 to 187 (CAVCMQFVRKENLLSLACQHQFCRSCWEQHCSVLVKDGVGVGISCMAQDC). The IBR-type zinc-finger motif lies at 207 to 269 (DKYRRYLFRD…RQMYHAPTDC (63 aa)). An RING-type 2; atypical zinc finger spans residues 296–325 (CPKCNICIEKNGGCNHMQCSKCKHDFCWMC). The active site involves C309. Residues C314, C317, C322, C325, H332, and C339 each contribute to the Zn(2+) site. Position 352 is a phosphoserine (S352). Residues 358-492 (REALKKYLFY…RTLLKDFHDT (135 aa)) are ariadne domain.

The protein belongs to the RBR family. Ariadne subfamily. As to quaternary structure, interacts (via RING-type zinc finger 1) with UBE2L3. Interacts (via RING-type zinc finger 2) with UBE2N. Interacts with neddylated CUL5. Interacts (via RING-type 2) with GFI1B. Interacts with GFI1; prevents its ubiquitination and proteasomal degradation. Interacts with DCUN1D1 (via UBA-like domain); promotes DCUN1D1 ubiquitination. In terms of processing, ubiquitinated. Ubiquitination promotes proteasomal degradation.

It is found in the nucleus. Its subcellular location is the cytoplasm. The catalysed reaction is [E2 ubiquitin-conjugating enzyme]-S-ubiquitinyl-L-cysteine + [acceptor protein]-L-lysine = [E2 ubiquitin-conjugating enzyme]-L-cysteine + [acceptor protein]-N(6)-ubiquitinyl-L-lysine.. It participates in protein modification; protein ubiquitination. Its activity is regulated as follows. Autoinhibited by the ariadne domain, which masks the second RING-type zinc finger that contains the active site and inhibits the E3 activity. Inhibition is relieved upon binding to neddylated cullin-RING ubiquitin ligase complexes, which activate the E3 ligase activity of ARIH1. E3 ubiquitin-protein ligase, which catalyzes ubiquitination of target proteins together with ubiquitin-conjugating enzyme E2 UBE2L3. Acts as an atypical E3 ubiquitin-protein ligase by working together with cullin-5-RING ubiquitin ligase complex (ECS complex, also named CRL5 complex) and initiating ubiquitination of ECS substrates: associates with ECS complex and specifically mediates addition of the first ubiquitin on ECS targets. The initial ubiquitin is then elongated. E3 ubiquitin-protein ligase activity is activated upon binding to neddylated form of the ECS complex. Mediates 'Lys-6', 'Lys-48'- and 'Lys-63'-linked polyubiquitination. May play a role in myelopoiesis. The sequence is that of E3 ubiquitin-protein ligase ARIH2 (Arih2) from Mus musculus (Mouse).